Consider the following 359-residue polypeptide: 3-dehydroquinate synthase (359 aa).

Residues 69-74, 103-107, 127-128, K140, K149, and 167-170 each bind NAD(+); these read DGEAHK, GVIGD, TT, and TLDT. E182, H245, and H262 together coordinate Zn(2+).

Belongs to the sugar phosphate cyclases superfamily. Dehydroquinate synthase family. The cofactor is Co(2+). Requires Zn(2+) as cofactor. NAD(+) is required as a cofactor.

It localises to the cytoplasm. It carries out the reaction 7-phospho-2-dehydro-3-deoxy-D-arabino-heptonate = 3-dehydroquinate + phosphate. It functions in the pathway metabolic intermediate biosynthesis; chorismate biosynthesis; chorismate from D-erythrose 4-phosphate and phosphoenolpyruvate: step 2/7. Its function is as follows. Catalyzes the conversion of 3-deoxy-D-arabino-heptulosonate 7-phosphate (DAHP) to dehydroquinate (DHQ). The polypeptide is 3-dehydroquinate synthase (Methylococcus capsulatus (strain ATCC 33009 / NCIMB 11132 / Bath)).